The sequence spans 485 residues: Probable WRKY transcription factor 10 (485 aa).

2 disordered regions span residues Ile-43–Gly-62 and Ile-215–Gln-293. Positions Ser-216–Ala-264 are enriched in acidic residues. Residues Ser-301–Pro-366 constitute a DNA-binding region (WRKY). Zn(2+)-binding residues include Cys-332, Cys-337, His-361, and His-363. The segment at Asp-358–Met-417 is disordered. Low complexity predominate over residues Ala-368–Ala-380. Residues Pro-399–Ser-411 are compositionally biased toward pro residues.

Belongs to the WRKY group I family. As to quaternary structure, interacts with IKU1. In terms of tissue distribution, expressed in male gametophytes (pollen) and in the endosperm of fertilized ovules.

The protein resides in the nucleus. Its function is as follows. Transcription factor. Interacts specifically with the W box (5'-(T)TGAC[CT]-3'), a frequently occurring elicitor-responsive cis-acting element. Modulates seed size by negatively regulating the cellularization of syncytial endosperm. In Arabidopsis thaliana (Mouse-ear cress), this protein is Probable WRKY transcription factor 10 (WRKY10).